The sequence spans 107 residues: Nucleoid-associated protein Pnec_0645 (107 aa).

Belongs to the YbaB/EbfC family. In terms of assembly, homodimer.

The protein localises to the cytoplasm. It is found in the nucleoid. Binds to DNA and alters its conformation. May be involved in regulation of gene expression, nucleoid organization and DNA protection. This chain is Nucleoid-associated protein Pnec_0645, found in Polynucleobacter necessarius subsp. necessarius (strain STIR1).